A 603-amino-acid polypeptide reads, in one-letter code: Probable NOT transcription complex subunit VIP2 (603 aa).

2 stretches are compositionally biased toward polar residues: residues 1 to 28 (MQGT…NNLS) and 36 to 70 (NLPS…PGYS). Disordered stretches follow at residues 1–70 (MQGT…PGYS), 212–242 (NDGS…LGSL), 306–335 (AGFN…GGVS), and 355–377 (SSHS…PLNS). Residues 312–335 (GTYSSNRPQQQLQHAPSVSSGGVS) are compositionally biased toward polar residues.

Belongs to the CNOT2/3/5 family. As to quaternary structure, binds to VIP1. Interacts with Agrobacterium tumefaciens VirE2. Forms a complex made of Agrobacterium VirE2, VIP1, VIP2 and single-stranded DNA (ssDNA).

Its subcellular location is the nucleus. Functionally, transcriptional regulator required for Agrobacterium-mediated stable genetic transformation by T-DNA integration in host genome, but not for T-DNA transient expression. The sequence is that of Probable NOT transcription complex subunit VIP2 (VIP2) from Nicotiana benthamiana.